The sequence spans 408 residues: LL-diaminopimelate aminotransferase (408 aa).

2 residues coordinate substrate: Y15 and G42. Residues Y72, 108 to 109 (SK), Y132, N187, Y218, and 246 to 248 (SFS) contribute to the pyridoxal 5'-phosphate site. K109, Y132, and N187 together coordinate substrate. An N6-(pyridoxal phosphate)lysine modification is found at K249. Residues R257 and N292 each contribute to the pyridoxal 5'-phosphate site. Substrate-binding residues include N292 and R388.

Belongs to the class-I pyridoxal-phosphate-dependent aminotransferase family. LL-diaminopimelate aminotransferase subfamily. In terms of assembly, homodimer. Pyridoxal 5'-phosphate is required as a cofactor.

The catalysed reaction is (2S,6S)-2,6-diaminopimelate + 2-oxoglutarate = (S)-2,3,4,5-tetrahydrodipicolinate + L-glutamate + H2O + H(+). It functions in the pathway amino-acid biosynthesis; L-lysine biosynthesis via DAP pathway; LL-2,6-diaminopimelate from (S)-tetrahydrodipicolinate (aminotransferase route): step 1/1. Involved in the synthesis of meso-diaminopimelate (m-DAP or DL-DAP), required for both lysine and peptidoglycan biosynthesis. Catalyzes the direct conversion of tetrahydrodipicolinate to LL-diaminopimelate. The sequence is that of LL-diaminopimelate aminotransferase from Prochlorococcus marinus (strain AS9601).